We begin with the raw amino-acid sequence, 356 residues long: UDP-N-acetylglucosamine--N-acetylmuramyl-(pentapeptide) pyrophosphoryl-undecaprenol N-acetylglucosamine transferase (356 aa).

Arg166, Ser196, and Gln290 together coordinate UDP-N-acetyl-alpha-D-glucosamine.

This sequence belongs to the glycosyltransferase 28 family. MurG subfamily.

It localises to the cell membrane. It carries out the reaction Mur2Ac(oyl-L-Ala-gamma-D-Glu-L-Lys-D-Ala-D-Ala)-di-trans,octa-cis-undecaprenyl diphosphate + UDP-N-acetyl-alpha-D-glucosamine = beta-D-GlcNAc-(1-&gt;4)-Mur2Ac(oyl-L-Ala-gamma-D-Glu-L-Lys-D-Ala-D-Ala)-di-trans,octa-cis-undecaprenyl diphosphate + UDP + H(+). It functions in the pathway cell wall biogenesis; peptidoglycan biosynthesis. Functionally, cell wall formation. Catalyzes the transfer of a GlcNAc subunit on undecaprenyl-pyrophosphoryl-MurNAc-pentapeptide (lipid intermediate I) to form undecaprenyl-pyrophosphoryl-MurNAc-(pentapeptide)GlcNAc (lipid intermediate II). The protein is UDP-N-acetylglucosamine--N-acetylmuramyl-(pentapeptide) pyrophosphoryl-undecaprenol N-acetylglucosamine transferase of Staphylococcus aureus (strain Mu3 / ATCC 700698).